Here is a 662-residue protein sequence, read N- to C-terminus: Bifunctional polymyxin resistance protein ArnA (662 aa).

A formyltransferase ArnAFT region spans residues 1–307; that stretch reads MTSKAVVFAY…ELGLVEGARL (307 aa). Residue His106 is the Proton donor; for formyltransferase activity of the active site. (6R)-10-formyltetrahydrofolate-binding positions include Arg116 and 138–142; that span reads IERAD. Residues 316–662 are dehydrogenase ArnADH; that stretch reads RRTRVLILGV…EALREREAQA (347 aa). Residues Asp349 and 370–371 contribute to the NAD(+) site; that span reads DI. UDP-alpha-D-glucuronate is bound by residues Ala395, Tyr400, and 434–435; that span reads TS. Glu436 acts as the Proton acceptor; for decarboxylase activity in catalysis. Residues Arg462, Asn493, 527 to 536, and Tyr614 contribute to the UDP-alpha-D-glucuronate site; that span reads RLVDGGAQKR. The active-site Proton donor; for decarboxylase activity is Arg620.

The protein in the N-terminal section; belongs to the Fmt family. UDP-L-Ara4N formyltransferase subfamily. This sequence in the C-terminal section; belongs to the NAD(P)-dependent epimerase/dehydratase family. UDP-glucuronic acid decarboxylase subfamily. As to quaternary structure, homohexamer, formed by a dimer of trimers.

The enzyme catalyses UDP-alpha-D-glucuronate + NAD(+) = UDP-beta-L-threo-pentopyranos-4-ulose + CO2 + NADH. It carries out the reaction UDP-4-amino-4-deoxy-beta-L-arabinose + (6R)-10-formyltetrahydrofolate = UDP-4-deoxy-4-formamido-beta-L-arabinose + (6S)-5,6,7,8-tetrahydrofolate + H(+). It functions in the pathway nucleotide-sugar biosynthesis; UDP-4-deoxy-4-formamido-beta-L-arabinose biosynthesis; UDP-4-deoxy-4-formamido-beta-L-arabinose from UDP-alpha-D-glucuronate: step 1/3. It participates in nucleotide-sugar biosynthesis; UDP-4-deoxy-4-formamido-beta-L-arabinose biosynthesis; UDP-4-deoxy-4-formamido-beta-L-arabinose from UDP-alpha-D-glucuronate: step 3/3. The protein operates within bacterial outer membrane biogenesis; lipopolysaccharide biosynthesis. Its function is as follows. Bifunctional enzyme that catalyzes the oxidative decarboxylation of UDP-glucuronic acid (UDP-GlcUA) to UDP-4-keto-arabinose (UDP-Ara4O) and the addition of a formyl group to UDP-4-amino-4-deoxy-L-arabinose (UDP-L-Ara4N) to form UDP-L-4-formamido-arabinose (UDP-L-Ara4FN). The modified arabinose is attached to lipid A and is required for resistance to polymyxin and cationic antimicrobial peptides. The polypeptide is Bifunctional polymyxin resistance protein ArnA (Pseudomonas aeruginosa (strain UCBPP-PA14)).